Here is a 156-residue protein sequence, read N- to C-terminus: Small ribosomal subunit protein uS7 (156 aa).

This sequence belongs to the universal ribosomal protein uS7 family. In terms of assembly, part of the 30S ribosomal subunit. Contacts proteins S9 and S11.

In terms of biological role, one of the primary rRNA binding proteins, it binds directly to 16S rRNA where it nucleates assembly of the head domain of the 30S subunit. Is located at the subunit interface close to the decoding center, probably blocks exit of the E-site tRNA. This chain is Small ribosomal subunit protein uS7, found in Phytoplasma mali (strain AT).